We begin with the raw amino-acid sequence, 239 residues long: Small ribosomal subunit protein uS2 (239 aa).

It belongs to the universal ribosomal protein uS2 family.

This chain is Small ribosomal subunit protein uS2, found in Francisella tularensis subsp. novicida (strain U112).